A 479-amino-acid polypeptide reads, in one-letter code: Lactaldehyde dehydrogenase (479 aa).

Leu150 provides a ligand contact to NAD(+). Arg161 is a binding site for (S)-lactate. Residues 176-179 (KPSE), Gln214, and Ser230 each bind NAD(+). Residue Glu251 coordinates (S)-lactate. Residues Glu251 and Cys285 contribute to the active site. Asn286 contacts (S)-lactate. Position 336 (Arg336) interacts with NAD(+). (S)-lactate-binding residues include Glu443 and His449.

It belongs to the aldehyde dehydrogenase family. In terms of assembly, homotetramer.

It carries out the reaction (S)-lactaldehyde + NAD(+) + H2O = (S)-lactate + NADH + 2 H(+). It catalyses the reaction glycolaldehyde + NAD(+) + H2O = glycolate + NADH + 2 H(+). The protein operates within carbohydrate degradation; L-fucose degradation. It functions in the pathway carbohydrate degradation; L-rhamnose degradation. Substrate inhibition is very strong with lactaldehyde, diminishing progressively with glycolaldehyde, glyceraldehyde or methylglyoxal. Inhibited by p-hydroxy mercuribenzoate and by some cations, including Mn(2+), Ca(2+), Cu(2+) and Zn(2+). Inhibited by NADH. Functionally, catalyzes the irreversible oxidation of L-lactaldehyde to L-lactate. Also shows high activity with glycolaldehyde and L-glyceraldehyde. Has weaker activity with various aldehydes such as methylglyoxal, propionaldehyde or benzaldehyde. Involved in the degradation of lactaldehyde produced during metabolism of L-fucose and L-rhamnose. It may be involved in several other metabolic pathways. The sequence is that of Lactaldehyde dehydrogenase (aldA) from Escherichia coli (strain K12).